The sequence spans 206 residues: LexA repressor (206 aa).

A DNA-binding region (H-T-H motif) is located at residues 28–48 (RAEIASELGFKSANAAEEHLK). Catalysis depends on for autocatalytic cleavage activity residues S122 and K160.

The protein belongs to the peptidase S24 family. As to quaternary structure, homodimer.

The catalysed reaction is Hydrolysis of Ala-|-Gly bond in repressor LexA.. Functionally, represses a number of genes involved in the response to DNA damage (SOS response), including recA and lexA. In the presence of single-stranded DNA, RecA interacts with LexA causing an autocatalytic cleavage which disrupts the DNA-binding part of LexA, leading to derepression of the SOS regulon and eventually DNA repair. This is LexA repressor from Tolumonas auensis (strain DSM 9187 / NBRC 110442 / TA 4).